Reading from the N-terminus, the 175-residue chain is Adenine phosphoribosyltransferase (175 aa).

Belongs to the purine/pyrimidine phosphoribosyltransferase family. Homodimer.

The protein resides in the cytoplasm. It carries out the reaction AMP + diphosphate = 5-phospho-alpha-D-ribose 1-diphosphate + adenine. It functions in the pathway purine metabolism; AMP biosynthesis via salvage pathway; AMP from adenine: step 1/1. Catalyzes a salvage reaction resulting in the formation of AMP, that is energically less costly than de novo synthesis. The polypeptide is Adenine phosphoribosyltransferase (Oenococcus oeni (strain ATCC BAA-331 / PSU-1)).